A 148-amino-acid chain; its full sequence is SsrA-binding protein (148 aa).

A compositionally biased stretch (basic and acidic residues) spans 129–142 (ETEKKRDWEREKAR). Residues 129 to 148 (ETEKKRDWEREKARIMRAGT) form a disordered region.

It belongs to the SmpB family.

Its subcellular location is the cytoplasm. Required for rescue of stalled ribosomes mediated by trans-translation. Binds to transfer-messenger RNA (tmRNA), required for stable association of tmRNA with ribosomes. tmRNA and SmpB together mimic tRNA shape, replacing the anticodon stem-loop with SmpB. tmRNA is encoded by the ssrA gene; the 2 termini fold to resemble tRNA(Ala) and it encodes a 'tag peptide', a short internal open reading frame. During trans-translation Ala-aminoacylated tmRNA acts like a tRNA, entering the A-site of stalled ribosomes, displacing the stalled mRNA. The ribosome then switches to translate the ORF on the tmRNA; the nascent peptide is terminated with the 'tag peptide' encoded by the tmRNA and targeted for degradation. The ribosome is freed to recommence translation, which seems to be the essential function of trans-translation. The polypeptide is SsrA-binding protein (Burkholderia lata (strain ATCC 17760 / DSM 23089 / LMG 22485 / NCIMB 9086 / R18194 / 383)).